Reading from the N-terminus, the 160-residue chain is Small ribosomal subunit protein uS9 (160 aa).

The protein belongs to the universal ribosomal protein uS9 family.

This chain is Small ribosomal subunit protein uS9, found in Xanthobacter autotrophicus (strain ATCC BAA-1158 / Py2).